The sequence spans 150 residues: Ribosomal RNA large subunit methyltransferase H (150 aa).

Residues Ala100 and 118 to 123 (LSEMTF) contribute to the S-adenosyl-L-methionine site.

It belongs to the RNA methyltransferase RlmH family. As to quaternary structure, homodimer.

It localises to the cytoplasm. It catalyses the reaction pseudouridine(1915) in 23S rRNA + S-adenosyl-L-methionine = N(3)-methylpseudouridine(1915) in 23S rRNA + S-adenosyl-L-homocysteine + H(+). In terms of biological role, specifically methylates the pseudouridine at position 1915 (m3Psi1915) in 23S rRNA. The protein is Ribosomal RNA large subunit methyltransferase H of Helicobacter pylori (strain J99 / ATCC 700824) (Campylobacter pylori J99).